A 137-amino-acid polypeptide reads, in one-letter code: GEL complex subunit OPTI (137 aa).

The Cytoplasmic segment spans residues 1 to 44 (MSGGRRKEEPPQPQLANGALKVSVWSKVLRSDAAWEDKDEFLDV). A helical transmembrane segment spans residues 45-65 (IYWFRQIIAVVLGVIWGVLPL). Position 66 (R66) is a topological domain, lumenal. A helical transmembrane segment spans residues 67 to 84 (GFLGIAGFCLINAGVLYL). Topologically, residues 85–103 (YFSNYLQIDEEEYGGTWEL) are cytoplasmic. The chain crosses the membrane as a helical span at residues 104-127 (TKEGFMTSFALFMVCVADSFTTGH). At 128 to 137 (LDHLLHCHPL) the chain is on the lumenal side.

This sequence belongs to the EMC6 family. In terms of assembly, component of the GET- and EMC-like (GEL) complex, composed of RAB5IF/OPTI and TMCO1. The GEL complex is part of the multi-pass translocon (MPT) complex, composed of three subcomplexes, the GEL complex (composed of RAB5IF/OPTI and TMCO1), the BOS complex (composed of NCLN/Nicalin, NOMO and TMEM147) and the PAT complex (composed of WDR83OS/Asterix and CCDC47). The MPT complex associates with the SEC61 complex. Interacts with NDUFS3, NDUFA4, NDUFV1, NDUFA9 and NDUFS8 of the mitochondrial membrane respiratory chain NADH dehydrogenase (Complex I). Interacts with UQCRC2 of the ubiquinol-cytochrome c reductase complex (Complex III). Interacts with COX5A and COX7C of the cytochrome c oxidase complex (Complex IV). Expressed in embryonic stem cells and differentiated neuronal cells.

It is found in the endoplasmic reticulum membrane. It localises to the mitochondrion inner membrane. Component of the multi-pass translocon (MPT) complex that mediates insertion of multi-pass membrane proteins into the lipid bilayer of membranes. The MPT complex takes over after the SEC61 complex: following membrane insertion of the first few transmembrane segments of proteins by the SEC61 complex, the MPT complex occludes the lateral gate of the SEC61 complex to promote insertion of subsequent transmembrane regions. Within the MPT complex, the GEL subcomplex may mediate insertion of transmembrane regions into the membrane. In addition to its role in multi-pass membrane insertion, RAB5IF/OPTI also acts as an assembly factor for mitochondrial respiratory complexes. The chain is GEL complex subunit OPTI from Homo sapiens (Human).